A 358-amino-acid chain; its full sequence is Ribosomal RNA large subunit methyltransferase M (358 aa).

Residues Ser-183, Ala-216–Gly-219, Asp-235, Asp-255, and Asp-271 each bind S-adenosyl-L-methionine. The Proton acceptor role is filled by Lys-300.

The protein belongs to the class I-like SAM-binding methyltransferase superfamily. RNA methyltransferase RlmE family. RlmM subfamily. Monomer.

The protein localises to the cytoplasm. The enzyme catalyses cytidine(2498) in 23S rRNA + S-adenosyl-L-methionine = 2'-O-methylcytidine(2498) in 23S rRNA + S-adenosyl-L-homocysteine + H(+). Functionally, catalyzes the 2'-O-methylation at nucleotide C2498 in 23S rRNA. This Pseudomonas fluorescens (strain SBW25) protein is Ribosomal RNA large subunit methyltransferase M.